Reading from the N-terminus, the 46-residue chain is Protein PsbN (46 aa).

The helical transmembrane segment at 7–27 (ALSVAIGVLAVLFGLTGFGVY) threads the bilayer.

This sequence belongs to the PsbN family.

It localises to the cellular thylakoid membrane. Its function is as follows. May play a role in photosystem I and II biogenesis. This Synechococcus sp. (strain CC9605) protein is Protein PsbN.